Consider the following 313-residue polypeptide: Porphobilinogen deaminase (313 aa).

Cysteine 242 is modified (S-(dipyrrolylmethanemethyl)cysteine).

The protein belongs to the HMBS family. Monomer. It depends on dipyrromethane as a cofactor.

The catalysed reaction is 4 porphobilinogen + H2O = hydroxymethylbilane + 4 NH4(+). Its pathway is porphyrin-containing compound metabolism; protoporphyrin-IX biosynthesis; coproporphyrinogen-III from 5-aminolevulinate: step 2/4. Tetrapolymerization of the monopyrrole PBG into the hydroxymethylbilane pre-uroporphyrinogen in several discrete steps. The polypeptide is Porphobilinogen deaminase (Yersinia pseudotuberculosis serotype O:1b (strain IP 31758)).